The primary structure comprises 294 residues: Nucleotide-binding protein Daud_0300 (294 aa).

11–18 (GLSGAGKT) provides a ligand contact to ATP. GTP is bound at residue 62 to 65 (DIRG).

It belongs to the RapZ-like family.

In terms of biological role, displays ATPase and GTPase activities. The protein is Nucleotide-binding protein Daud_0300 of Desulforudis audaxviator (strain MP104C).